Here is a 178-residue protein sequence, read N- to C-terminus: ATP synthase subunit delta (178 aa).

It belongs to the ATPase delta chain family. F-type ATPases have 2 components, F(1) - the catalytic core - and F(0) - the membrane proton channel. F(1) has five subunits: alpha(3), beta(3), gamma(1), delta(1), epsilon(1). F(0) has three main subunits: a(1), b(2) and c(10-14). The alpha and beta chains form an alternating ring which encloses part of the gamma chain. F(1) is attached to F(0) by a central stalk formed by the gamma and epsilon chains, while a peripheral stalk is formed by the delta and b chains.

The protein localises to the cell inner membrane. Functionally, f(1)F(0) ATP synthase produces ATP from ADP in the presence of a proton or sodium gradient. F-type ATPases consist of two structural domains, F(1) containing the extramembraneous catalytic core and F(0) containing the membrane proton channel, linked together by a central stalk and a peripheral stalk. During catalysis, ATP synthesis in the catalytic domain of F(1) is coupled via a rotary mechanism of the central stalk subunits to proton translocation. This protein is part of the stalk that links CF(0) to CF(1). It either transmits conformational changes from CF(0) to CF(1) or is implicated in proton conduction. The sequence is that of ATP synthase subunit delta from Acinetobacter baumannii (strain AB307-0294).